Reading from the N-terminus, the 620-residue chain is Probable potassium transport system protein Kup 1 (620 aa).

The next 12 helical transmembrane spans lie at 7–27 (GIGL…TSPL), 50–70 (VLSL…VIVI), 102–122 (MMLG…TPAI), 136–156 (PDLK…LFAI), 168–188 (FGPV…ANIV), 211–231 (LMSF…EALY), 246–266 (WFGL…ALLI), 284–304 (MVVP…QAVI), 336–356 (IYVP…VVGF), 368–388 (IAVT…AALL), 393–413 (PVVV…FFAA), and 415–435 (IIKV…SFTV).

It belongs to the HAK/KUP transporter (TC 2.A.72) family.

Its subcellular location is the cell inner membrane. The enzyme catalyses K(+)(in) + H(+)(in) = K(+)(out) + H(+)(out). Transport of potassium into the cell. Likely operates as a K(+):H(+) symporter. The chain is Probable potassium transport system protein Kup 1 from Rhodopseudomonas palustris (strain ATCC BAA-98 / CGA009).